Consider the following 161-residue polypeptide: Cyclic pyranopterin monophosphate synthase (161 aa).

Residues 76-78 and 114-115 each bind substrate; these read MCH and ME. Aspartate 129 is an active-site residue.

The protein belongs to the MoaC family. Homohexamer; trimer of dimers.

The enzyme catalyses (8S)-3',8-cyclo-7,8-dihydroguanosine 5'-triphosphate = cyclic pyranopterin phosphate + diphosphate. It participates in cofactor biosynthesis; molybdopterin biosynthesis. Its function is as follows. Catalyzes the conversion of (8S)-3',8-cyclo-7,8-dihydroguanosine 5'-triphosphate to cyclic pyranopterin monophosphate (cPMP). This chain is Cyclic pyranopterin monophosphate synthase, found in Clostridium acetobutylicum (strain ATCC 824 / DSM 792 / JCM 1419 / IAM 19013 / LMG 5710 / NBRC 13948 / NRRL B-527 / VKM B-1787 / 2291 / W).